The sequence spans 342 residues: AA9 family lytic polysaccharide monooxygenase H (342 aa).

An N-terminal signal peptide occupies residues 1–19 (MSKASALLAGLTGAALVAA). Positions 20 and 106 each coordinate Cu(2+). Disulfide bonds link Cys-75–Cys-195 and Cys-117–Cys-121. The O2 site is built by His-181 and Gln-190. Position 192 (Tyr-192) interacts with Cu(2+). The tract at residues 263-308 (ATVPGGGGANPTATTTAATSAAPSTTLRTTTTSAAQTTAPPSGDVQ) is disordered. A compositionally biased stretch (low complexity) spans 272–305 (NPTATTTAATSAAPSTTLRTTTTSAAQTTAPPSG). In terms of domain architecture, CBM1 spans 306 to 342 (DVQTKYGQCGGNGWTGPTVCAPGSSCSVLNEWYSQCL).

Belongs to the polysaccharide monooxygenase AA9 family. Cu(2+) is required as a cofactor.

The protein localises to the secreted. The enzyme catalyses [(1-&gt;4)-beta-D-glucosyl]n+m + reduced acceptor + O2 = 4-dehydro-beta-D-glucosyl-[(1-&gt;4)-beta-D-glucosyl]n-1 + [(1-&gt;4)-beta-D-glucosyl]m + acceptor + H2O.. The presence of lignin presents a significant source of antioxidants, which probably increase the activity by trapping liberated oxidized fragments. In terms of biological role, lytic polysaccharide monooxygenase (LPMO) that depolymerizes crystalline and amorphous polysaccharides via the oxidation of scissile alpha- or beta-(1-4)-glycosidic bonds, yielding C1 or C4 oxidation products. Catalysis by LPMOs requires the reduction of the active-site copper from Cu(II) to Cu(I) by a reducing agent and H(2)O(2) or O(2) as a cosubstrate. Hydrolyzes weakly barley beta-glucan, carboxymethyl cellulose, lichenan, wheat arabinoxylan and birchwood xylan. Stimulates the hydrolysis of lignocellulosic substrates (such as hydrothermal pretreated wheat straw or steam-pretreated spruce), when combined with other cellulolytic enzymes. The sequence is that of AA9 family lytic polysaccharide monooxygenase H from Thermothelomyces thermophilus (strain ATCC 42464 / BCRC 31852 / DSM 1799) (Sporotrichum thermophile).